Here is a 219-residue protein sequence, read N- to C-terminus: Vacuolar protein sorting-associated protein 32 homolog 2 (219 aa).

Coiled-coil stretches lie at residues 10–41 (KQEANALQTLDKLNETLEMLEKKEKVLLKKAG) and 117–176 (TNID…QLLQ). The tract at residues 168–219 (EELESQLLQPATTAPPLPSVPVPAGRQPARPVPQKRTAEEEELAALQAEMAL) is disordered.

This sequence belongs to the SNF7 family. As to quaternary structure, component of the endosomal sorting required for transport complex III (ESCRT-III), composed at least of VPS2, VPS20, VPS24 and VPS32. Interacts with SKD1. Interacts with BRO1/ALIX.

The protein localises to the endosome. In terms of biological role, component of the ESCRT-III complex, which is required for multivesicular bodies (MVBs) formation and sorting of endosomal cargo proteins into MVBs. The ESCRT-III complex is probably involved in the concentration of MVB cargo. The polypeptide is Vacuolar protein sorting-associated protein 32 homolog 2 (VPS32.2) (Arabidopsis thaliana (Mouse-ear cress)).